A 249-amino-acid polypeptide reads, in one-letter code: Cytoplasmic envelopment protein 1 (249 aa).

Belongs to the herpesviridae cytoplasmic envelopment protein 1 family.

Its subcellular location is the virion. It localises to the virion tegument. The protein resides in the host cytoplasm. The protein localises to the host Golgi apparatus. Plays a critical role in cytoplasmic virus egress. Participates in the final step of tegumentation and envelope acquisition within the host cytoplasm. In Homo sapiens (Human), this protein is Cytoplasmic envelopment protein 1 (UL103).